Reading from the N-terminus, the 155-residue chain is U4/U6.U5 small nuclear ribonucleoprotein 27 kDa protein (155 aa).

Composition is skewed to basic residues over residues 1-31 and 39-59; these read MGRSRSRSPRRERRRSRSTSRERERRRRERS and RRSRSRSPHRRRSRSPRRHRS. Positions 1-97 are disordered; it reads MGRSRSRSPR…ITEEDLEGKT (97 aa). 2 positions are modified to phosphoserine: S61 and S65. The span at 66 to 97 shows a compositional bias: basic and acidic residues; sequence RLKERRDEEKKETKETKSKERQITEEDLEGKT. S111, S114, and S132 each carry phosphoserine.

It belongs to the SNUT3 family. In terms of assembly, part of a tri-snRNP complex. In terms of processing, phosphorylated in vitro by snRNP-associated protein kinase.

It localises to the nucleus. Functionally, may play a role in mRNA splicing. The chain is U4/U6.U5 small nuclear ribonucleoprotein 27 kDa protein (SNRNP27) from Homo sapiens (Human).